The primary structure comprises 202 residues: Securin (202 aa).

The segment at 1 to 92 (MATLIYVDKE…QKQPSFSAKK (92 aa)) is disordered. A2 carries the N-acetylalanine modification. Positions 61-64 (RKAL) match the D-box motif. Short sequence motifs (TEK-box) lie at residues 71–73 (TEK) and 94–96 (TEK). An SH3-binding motif is present at residues 163–173 (XPSPVKMPSPP). A Phosphoserine; by CDK1 modification is found at S165.

It belongs to the securin family. Interacts with RPS10 and DNAJA1. Interacts with the caspase-like ESPL1, and prevents its protease activity probably by covering its active site. Interacts with TP53 and blocks its activity probably by blocking its binding to DNA. Interacts with the Ku 70 kDa subunit of ds-DNA kinase. Interacts with PTTG1IP. Post-translationally, phosphorylated at Ser-165 by CDK1 during mitosis. In terms of processing, phosphorylated in vitro by ds-DNA kinase. Ubiquitinated through 'Lys-11' linkage of ubiquitin moieties by the anaphase promoting complex (APC) at the onset of anaphase, conducting to its degradation. 'Lys-11'-linked ubiquitination is mediated by the E2 ligase UBE2C/UBCH10.

The protein resides in the cytoplasm. It localises to the nucleus. Its function is as follows. Regulatory protein, which plays a central role in chromosome stability, in the p53/TP53 pathway, and DNA repair. Probably acts by blocking the action of key proteins. During the mitosis, it blocks Separase/ESPL1 function, preventing the proteolysis of the cohesin complex and the subsequent segregation of the chromosomes. At the onset of anaphase, it is ubiquitinated, conducting to its destruction and to the liberation of ESPL1. Its function is however not limited to a blocking activity, since it is required to activate ESPL1. Negatively regulates the transcriptional activity and related apoptosis activity of TP53. The negative regulation of TP53 may explain the strong transforming capability of the protein when it is overexpressed. May also play a role in DNA repair via its interaction with Ku, possibly by connecting DNA damage-response pathways with sister chromatid separation. In Pan troglodytes (Chimpanzee), this protein is Securin (PTTG1).